A 467-amino-acid polypeptide reads, in one-letter code: Nuclear pore complex protein Nup50 (467 aa).

A compositionally biased stretch (basic and acidic residues) spans 1-14 (MAKRVAEKELTDRN). Residues 1–20 (MAKRVAEKELTDRNWDEEDE) are disordered. At lysine 8 the chain carries N6-acetyllysine. Position 52 is a phosphoserine (serine 52). Repeat 1 spans residues 76-77 (FG). A 5 X 2 AA repeats of F-G region spans residues 76–303 (FGGGSGGKPL…FSPGNSSLFG (228 aa)). N6-acetyllysine is present on lysine 83. Residues 84–103 (PLEGLTNGNSTDSATPFSSA) form a disordered region. Residues 89 to 103 (TNGNSTDSATPFSSA) are compositionally biased toward polar residues. The stretch at 113–114 (FG) is repeat 2. Residue lysine 127 is modified to N6-acetyllysine. 2 disordered regions span residues 129–151 (ISSPKCNSSNQPPSSGPASSTSC) and 201–248 (LENG…EDTS). Residues 132–151 (PKCNSSNQPPSSGPASSTSC) show a composition bias toward polar residues. Positions 144 to 206 (GPASSTSCTG…IEKQLENGGS (63 aa)) are binding to CDKN1B. Serine 209 is modified (phosphoserine). The stretch at 226-227 (FG) is repeat 3. Polar residues predominate over residues 226–236 (FGSTKLQQDSP). Position 235 is a phosphoserine (serine 235). At threonine 247 the chain carries Phosphothreonine. Serine 269 is subject to Phosphoserine. The stretch at 272-273 (FG) is repeat 4. Residue serine 295 is modified to Phosphoserine. Repeat 5 spans residues 302-303 (FG). The span at 313-330 (SSPFSAKASESQAGGSSS) shows a compositional bias: low complexity. The disordered stretch occupies residues 313 to 348 (SSPFSAKASESQAGGSSSECRDGEEEESDEPPKVVV). Residues 334–467 (DGEEEESDEP…HKILLQKKDV (134 aa)) form the RanBD1 domain. Lysine 352 participates in a covalent cross-link: Glycyl lysine isopeptide (Lys-Gly) (interchain with G-Cter in SUMO2). Position 449 is an N6-acetyllysine (lysine 449).

Does not interact with TPR. Interacts with Importin alpha-2, Importin beta, Importin beta-2, NUP153, Ran binding protein 7, CDKN1B and itself. Highly expressed in testis, intermediate levels in kidney, liver, spleen and low basal levels in somatic cells. Expression in testis undergoes changes and subcellular localization during germ cell differentiation.

The protein resides in the nucleus. The protein localises to the nuclear pore complex. It is found in the nucleus membrane. Component of the nuclear pore complex that has a direct role in nuclear protein import. Actively displaces NLSs from importin-alpha, and facilitates disassembly of the importin-alpha:beta-cargo complex and importin recycling. Interacts with regulatory proteins of cell cycle progression including CDKN1B. This interaction is required for correct intracellular transport and degradation of CDKN1B. The sequence is that of Nuclear pore complex protein Nup50 (Nup50) from Rattus norvegicus (Rat).